The primary structure comprises 426 residues: 3-phosphoshikimate 1-carboxyvinyltransferase (426 aa).

The 3-phosphoshikimate site is built by Lys-22, Ser-23, and Arg-27. Lys-22 serves as a coordination point for phosphoenolpyruvate. Phosphoenolpyruvate contacts are provided by Gly-96 and Arg-124. 7 residues coordinate 3-phosphoshikimate: Ser-170, Ser-171, Gln-172, Ser-198, Asp-314, Asn-337, and Lys-341. Residue Gln-172 coordinates phosphoenolpyruvate. The Proton acceptor role is filled by Asp-314. 3 residues coordinate phosphoenolpyruvate: Arg-345, Arg-387, and Lys-412.

The protein belongs to the EPSP synthase family. In terms of assembly, monomer.

It localises to the cytoplasm. It carries out the reaction 3-phosphoshikimate + phosphoenolpyruvate = 5-O-(1-carboxyvinyl)-3-phosphoshikimate + phosphate. The protein operates within metabolic intermediate biosynthesis; chorismate biosynthesis; chorismate from D-erythrose 4-phosphate and phosphoenolpyruvate: step 6/7. Catalyzes the transfer of the enolpyruvyl moiety of phosphoenolpyruvate (PEP) to the 5-hydroxyl of shikimate-3-phosphate (S3P) to produce enolpyruvyl shikimate-3-phosphate and inorganic phosphate. This is 3-phosphoshikimate 1-carboxyvinyltransferase from Vibrio atlanticus (strain LGP32) (Vibrio splendidus (strain Mel32)).